We begin with the raw amino-acid sequence, 182 residues long: UPF0397 protein SPG_0438 (182 aa).

5 consecutive transmembrane segments (helical) span residues 10-30 (VVAV…NIPT), 46-66 (LLSI…GHAI), 73-93 (YGLW…VGLF), 109-129 (ILIF…VLAP), and 148-168 (IVAG…LLLA).

Belongs to the UPF0397 family.

The protein resides in the cell membrane. The protein is UPF0397 protein SPG_0438 of Streptococcus pneumoniae serotype 19F (strain G54).